The following is a 79-amino-acid chain: Conotoxin Vi6.9 (79 aa).

The signal sequence occupies residues 1-22 (MKLTCMVIITVLFLTASQLITA). Positions 23–47 (DYSRDQRQYRAVRLGDEMRNFKGAR) are excised as a propeptide. Cystine bridges form between Cys-49–Cys-62, Cys-56–Cys-67, and Cys-61–Cys-77. 4-hydroxyproline is present on residues Pro-60 and Pro-63.

It belongs to the conotoxin O1 superfamily. As to expression, expressed by the venom duct.

Its subcellular location is the secreted. Ion channel inhibitor that inhibits the increase in intracellular calcium upon depolarization in DRG neurons. In vivo, both intraperitoneal and intracranial injections into mice induce hyperactivity. The polypeptide is Conotoxin Vi6.9 (Conus virgo (Virgin cone)).